The chain runs to 362 residues: 3-dehydroquinate synthase (362 aa).

NAD(+)-binding positions include 71–76 (DGEQYK), 105–109 (GVVGD), 129–130 (TT), Lys-142, Lys-151, and 169–172 (CLKT). Residues Glu-184, His-247, and His-264 each contribute to the Zn(2+) site.

It belongs to the sugar phosphate cyclases superfamily. Dehydroquinate synthase family. It depends on Co(2+) as a cofactor. The cofactor is Zn(2+). NAD(+) is required as a cofactor.

It is found in the cytoplasm. The catalysed reaction is 7-phospho-2-dehydro-3-deoxy-D-arabino-heptonate = 3-dehydroquinate + phosphate. It functions in the pathway metabolic intermediate biosynthesis; chorismate biosynthesis; chorismate from D-erythrose 4-phosphate and phosphoenolpyruvate: step 2/7. Functionally, catalyzes the conversion of 3-deoxy-D-arabino-heptulosonate 7-phosphate (DAHP) to dehydroquinate (DHQ). This Shigella flexneri serotype 5b (strain 8401) protein is 3-dehydroquinate synthase.